The following is a 123-amino-acid chain: Ribonuclease P protein component 2 (123 aa).

It belongs to the eukaryotic/archaeal RNase P protein component 2 family. In terms of assembly, consists of a catalytic RNA component and at least 4 protein subunits.

The catalysed reaction is Endonucleolytic cleavage of RNA, removing 5'-extranucleotides from tRNA precursor.. In terms of biological role, part of ribonuclease P, a protein complex that generates mature tRNA molecules by cleaving their 5'-ends. The protein is Ribonuclease P protein component 2 of Aeropyrum pernix (strain ATCC 700893 / DSM 11879 / JCM 9820 / NBRC 100138 / K1).